The primary structure comprises 349 residues: Secondary metabolism regulator LAE1 (349 aa).

The disordered stretch occupies residues 1-46 (MSSRNAPSGCVAPSPATAAPPSPTNLRLTVGQSGSESANEPGGEPE). Over residues 25–38 (NLRLTVGQSGSESA) the composition is skewed to polar residues.

It belongs to the methyltransferase superfamily. LaeA methyltransferase family. As to quaternary structure, component of the heterotrimeric velvet complex composed of LAE1, VEL1 and VEL2; VEL1 acting as a bridging protein between LAE1 and VEL2.

It localises to the nucleus. The catalysed reaction is L-methionyl-[protein] + S-adenosyl-L-methionine = S-methyl-L-methionyl-[protein] + S-adenosyl-L-homocysteine. In terms of biological role, methyltransferase that performs automethylation. No other methyl-accepting substrate has been identified yet. Component of the velvet transcription factor complex that acts as a global regulator for secondary metabolite gene expression. Controls the expression of the gamma-pentyl-pyrone gene clusters. Required for the expression of cellulase. Regulates asexual sporulation (conidiation) by environmental stimuli such as light and/or mechanical injury. Required for oxidative stress tolerance. Also plays a role in defense and parasitism on other fungi. The chain is Secondary metabolism regulator LAE1 from Hypocrea atroviridis (strain ATCC 20476 / IMI 206040) (Trichoderma atroviride).